Reading from the N-terminus, the 85-residue chain is uncharacterized protein (85 aa).

A coiled-coil region spans residues 17–53 (KKRYEMLVQELLKEDDEEREKILAEELELLLDFLKKA).

This is an uncharacterized protein from Archaeoglobus fulgidus (strain ATCC 49558 / DSM 4304 / JCM 9628 / NBRC 100126 / VC-16).